The following is a 935-amino-acid chain: ATP-dependent RNA helicase dbp10 (935 aa).

A disordered region spans residues 1–51 (MAPRAASPALSENEFDITGALFQNDSESDNERSSAKSKRQPKKKIPSQDLD). Basic residues predominate over residues 35-45 (AKSKRQPKKKI). Positions 89-117 (GGFQAMGLSANLLKAIARKGFSVPTPIQR) match the Q motif motif. One can recognise a Helicase ATP-binding domain in the interval 120–292 (IPVIMDDQDV…RAGLQEPTLI (173 aa)). 133–140 (ARTGSGKT) serves as a coordination point for ATP. Residues 240-243 (DEAD) carry the DEAD box motif. The Helicase C-terminal domain maps to 360–514 (EMEKAVNTKE…HVNFAEDVVA (155 aa)). 2 disordered regions span residues 638-674 (LETKKKRSKANAKSEFLEDAPEGLKTGEGEAGKNEDE) and 857-935 (SGKR…SRKR). 3 stretches are compositionally biased toward basic and acidic residues: residues 662–673 (KTGEGEAGKNED), 866–881 (EQAPKRADPLRGDYEK), and 906–916 (SELRNTDDIRI).

It belongs to the DEAD box helicase family. DDX54/DBP10 subfamily.

It localises to the nucleus. The protein resides in the nucleolus. The enzyme catalyses ATP + H2O = ADP + phosphate + H(+). Functionally, ATP-binding RNA helicase involved in the biogenesis of 60S ribosomal subunits and is required for the normal formation of 25S and 5.8S rRNAs. This is ATP-dependent RNA helicase dbp10 (dbp10) from Aspergillus clavatus (strain ATCC 1007 / CBS 513.65 / DSM 816 / NCTC 3887 / NRRL 1 / QM 1276 / 107).